Reading from the N-terminus, the 213-residue chain is Na(+)-translocating NADH-quinone reductase subunit D (213 aa).

The next 7 membrane-spanning stretches (helical) occupy residues 21–41 (PLIA…VNTA), 42–62 (LTMG…VSLL), 77–97 (IIIS…FFDI), 101–121 (LSVF…AESL), 131–151 (FLDG…VSII), 153–173 (EFFG…FYAS), and 183–203 (FGLM…IWGV).

It belongs to the NqrDE/RnfAE family. Composed of six subunits; NqrA, NqrB, NqrC, NqrD, NqrE and NqrF.

The protein resides in the cell inner membrane. It carries out the reaction a ubiquinone + n Na(+)(in) + NADH + H(+) = a ubiquinol + n Na(+)(out) + NAD(+). NQR complex catalyzes the reduction of ubiquinone-1 to ubiquinol by two successive reactions, coupled with the transport of Na(+) ions from the cytoplasm to the periplasm. NqrA to NqrE are probably involved in the second step, the conversion of ubisemiquinone to ubiquinol. This is Na(+)-translocating NADH-quinone reductase subunit D from Chlamydia abortus (strain DSM 27085 / S26/3) (Chlamydophila abortus).